The following is a 503-amino-acid chain: Probable cytosol aminopeptidase (503 aa).

Residues K274 and D279 each contribute to the Mn(2+) site. K286 is an active-site residue. The Mn(2+) site is built by D297, D356, and E358. Residue R360 is part of the active site.

The protein belongs to the peptidase M17 family. The cofactor is Mn(2+).

The protein localises to the cytoplasm. It catalyses the reaction Release of an N-terminal amino acid, Xaa-|-Yaa-, in which Xaa is preferably Leu, but may be other amino acids including Pro although not Arg or Lys, and Yaa may be Pro. Amino acid amides and methyl esters are also readily hydrolyzed, but rates on arylamides are exceedingly low.. The enzyme catalyses Release of an N-terminal amino acid, preferentially leucine, but not glutamic or aspartic acids.. Functionally, presumably involved in the processing and regular turnover of intracellular proteins. Catalyzes the removal of unsubstituted N-terminal amino acids from various peptides. This chain is Probable cytosol aminopeptidase, found in Burkholderia multivorans (strain ATCC 17616 / 249).